The primary structure comprises 434 residues: MGNIVAIVGRPNVGKSTFFNRLIQRREAIIDSVSGVTRDRHYGKSDWNGKKFSLIDTGGYVKGSDDIFEAEIDKQVELAIDEADAIIFIVDVESGVTSMDEEVANLLRRVNKPVLLAVNKVDNNKRLANAVEFYSLGLGEYFPIASTNGSGTGDLLDALIEALPEIEEEDESELPRFAVVGRPNAGKSSFINALIGEDRYIVTDIAGTTRDSIDTRYNRFGFEFNLVDTAGIRRKSKVKENLEFYSVMRSVRAIENCDVCLVVLDATRGFDGQVQNIFWLAQRNHKGIVILVNKWDLVDKETNTMKEYEAMIRREIEPFTDVPIVFISVLTKQRVFKAIETAVKVFESRSKKIKTRQFNDVMLPIIERNPPPAYKGKYVKIKFCMQLPTPHPQFAFFCNLPQYVRDPYKRFLENKLRQEFDFQGVPISIFFRKK.

EngA-type G domains follow at residues 3 to 167 and 175 to 350; these read NIVA…PEIE and PRFA…ESRS. Residues 9 to 16, 56 to 60, 119 to 122, 181 to 188, 228 to 232, and 293 to 296 contribute to the GTP site; these read GRPNVGKS, DTGGY, NKVD, GRPNAGKS, DTAGI, and NKWD. The KH-like domain occupies 351–434; sequence KKIKTRQFND…VPISIFFRKK (84 aa).

It belongs to the TRAFAC class TrmE-Era-EngA-EngB-Septin-like GTPase superfamily. EngA (Der) GTPase family. In terms of assembly, associates with the 50S ribosomal subunit.

Its function is as follows. GTPase that plays an essential role in the late steps of ribosome biogenesis. The polypeptide is GTPase Der (Christiangramia forsetii (strain DSM 17595 / CGMCC 1.15422 / KT0803) (Gramella forsetii)).